A 1190-amino-acid chain; its full sequence is DNA-directed RNA polymerase subunit beta (1190 aa).

The segment at 1155-1190 is disordered; the sequence is ENFDDDDDHAPDAIMVDVKPAEREEAGEEKDAVTKE. Over residues 1173–1190 the composition is skewed to basic and acidic residues; sequence KPAEREEAGEEKDAVTKE.

It belongs to the RNA polymerase beta chain family. As to quaternary structure, the RNAP catalytic core consists of 2 alpha, 1 beta, 1 beta' and 1 omega subunit. When a sigma factor is associated with the core the holoenzyme is formed, which can initiate transcription.

It catalyses the reaction RNA(n) + a ribonucleoside 5'-triphosphate = RNA(n+1) + diphosphate. In terms of biological role, DNA-dependent RNA polymerase catalyzes the transcription of DNA into RNA using the four ribonucleoside triphosphates as substrates. This is DNA-directed RNA polymerase subunit beta from Geobacillus kaustophilus (strain HTA426).